We begin with the raw amino-acid sequence, 368 residues long: Peptide chain release factor 2 (368 aa).

Residue Gln250 is modified to N5-methylglutamine.

Belongs to the prokaryotic/mitochondrial release factor family. Methylated by PrmC. Methylation increases the termination efficiency of RF2.

It is found in the cytoplasm. Functionally, peptide chain release factor 2 directs the termination of translation in response to the peptide chain termination codons UGA and UAA. The chain is Peptide chain release factor 2 from Rickettsia conorii (strain ATCC VR-613 / Malish 7).